The chain runs to 462 residues: MNTSPKTLKTIAILGQPNVGKSSLFNRLARERIAITSDFAGTTRDINKRKIALNGHEVELLDTGGMAKDALLSKEIKALNLKAAQMSDLILYVVDGKSIPSDEDIKLFREVFKINPNCFLVINKIDNDKEKERAYAFSSFGTPKSFNISVSHNRGISALIDAVLNALNLNQIIEQDLDADILESLETPNNALEETKEEEIIQVGIIGRVNVGKSSLLNALTKKERSLVSSVAGTTIDPIDETILIGDQKICFVDTAGIRHRGKILGIEKYALERTQKALEKSHIALLVLDVSTPFVELDEKISSLADKHSLGIILILNKWDIRYAPYEEIMATLKRKFRFLEYAPVITTSCLKARHIDEIKHKIIEVYECFSKRIPTSLLNSVISQATQKHPLPSDGGKLVKVYYATQFATKPPQISLIMNRPKALHFSYKRYLINTLRKEFNFLGTPLILNAKDKKSAQQN.

EngA-type G domains follow at residues 9–171 and 201–372; these read KTIA…NLNQ and IQVG…ECFS. GTP is bound by residues 15–22, 62–66, 123–126, 207–214, 254–258, and 318–321; these read GQPNVGKS, DTGGM, NKID, GRVNVGKS, DTAGI, and NKWD. Residues 373 to 457 form the KH-like domain; sequence KRIPTSLLNS…PLILNAKDKK (85 aa).

Belongs to the TRAFAC class TrmE-Era-EngA-EngB-Septin-like GTPase superfamily. EngA (Der) GTPase family. As to quaternary structure, associates with the 50S ribosomal subunit.

Functionally, GTPase that plays an essential role in the late steps of ribosome biogenesis. The sequence is that of GTPase Der from Helicobacter pylori (strain P12).